The following is a 275-amino-acid chain: Bis(5'-nucleosyl)-tetraphosphatase, symmetrical (275 aa).

This sequence belongs to the Ap4A hydrolase family.

The catalysed reaction is P(1),P(4)-bis(5'-adenosyl) tetraphosphate + H2O = 2 ADP + 2 H(+). In terms of biological role, hydrolyzes diadenosine 5',5'''-P1,P4-tetraphosphate to yield ADP. In Hamiltonella defensa subsp. Acyrthosiphon pisum (strain 5AT), this protein is Bis(5'-nucleosyl)-tetraphosphatase, symmetrical.